Here is a 318-residue protein sequence, read N- to C-terminus: NADH-ubiquinone oxidoreductase chain 1 (318 aa).

Transmembrane regions (helical) follow at residues 2–22 (FLMN…FLTL), 37–57 (PNIV…KLFI), 69–89 (LMFT…WIPM), 100–120 (LGVL…LWSG), 136–156 (VAQT…TMMM), 171–191 (HMWL…STLA), 206–226 (ELVS…FFMA), 253–273 (ELFT…FLWI), and 294–314 (LPLT…SAGI).

The protein belongs to the complex I subunit 1 family.

It is found in the mitochondrion inner membrane. It carries out the reaction a ubiquinone + NADH + 5 H(+)(in) = a ubiquinol + NAD(+) + 4 H(+)(out). Functionally, core subunit of the mitochondrial membrane respiratory chain NADH dehydrogenase (Complex I) that is believed to belong to the minimal assembly required for catalysis. Complex I functions in the transfer of electrons from NADH to the respiratory chain. The immediate electron acceptor for the enzyme is believed to be ubiquinone. The chain is NADH-ubiquinone oxidoreductase chain 1 (MT-ND1) from Tolypeutes matacus (Southern three-banded armadillo).